The chain runs to 308 residues: Methionyl-tRNA formyltransferase (308 aa).

Position 111–114 (111–114) interacts with (6S)-5,6,7,8-tetrahydrofolate; it reads SLLP.

The protein belongs to the Fmt family.

The enzyme catalyses L-methionyl-tRNA(fMet) + (6R)-10-formyltetrahydrofolate = N-formyl-L-methionyl-tRNA(fMet) + (6S)-5,6,7,8-tetrahydrofolate + H(+). In terms of biological role, attaches a formyl group to the free amino group of methionyl-tRNA(fMet). The formyl group appears to play a dual role in the initiator identity of N-formylmethionyl-tRNA by promoting its recognition by IF2 and preventing the misappropriation of this tRNA by the elongation apparatus. The protein is Methionyl-tRNA formyltransferase of Thermodesulfovibrio yellowstonii (strain ATCC 51303 / DSM 11347 / YP87).